We begin with the raw amino-acid sequence, 143 residues long: 3-dehydroquinate dehydratase (143 aa).

Y23 functions as the Proton acceptor in the catalytic mechanism. Positions 74, 80, and 87 each coordinate substrate. The active-site Proton donor is H100. Substrate contacts are provided by residues 101-102 (IS) and R111.

This sequence belongs to the type-II 3-dehydroquinase family. In terms of assembly, homododecamer.

The catalysed reaction is 3-dehydroquinate = 3-dehydroshikimate + H2O. It participates in metabolic intermediate biosynthesis; chorismate biosynthesis; chorismate from D-erythrose 4-phosphate and phosphoenolpyruvate: step 3/7. Catalyzes a trans-dehydration via an enolate intermediate. The chain is 3-dehydroquinate dehydratase from Endomicrobium trichonymphae.